Reading from the N-terminus, the 359-residue chain is Protein-arginine kinase (359 aa).

Positions 25 to 257 constitute a Phosphagen kinase C-terminal domain; it reads IVISSRVRLA…QQVIEQERML (233 aa). ATP is bound by residues 28–32, His-93, Arg-128, 179–183, and 210–215; these read SSRVR, RASLM, and RGIYGE. The RDXXRA motif of the pArg binding pocket involved in allosteric regulation signature appears at 340 to 345; the sequence is RDAKRA.

This sequence belongs to the ATP:guanido phosphotransferase family.

It catalyses the reaction L-arginyl-[protein] + ATP = N(omega)-phospho-L-arginyl-[protein] + ADP + H(+). Its activity is regulated as follows. Appears to be allosterically activated by the binding of pArg-containing polypeptides to the pArg-binding pocket localized in the C-terminal domain of McsB. Functionally, catalyzes the specific phosphorylation of arginine residues in proteins. This chain is Protein-arginine kinase, found in Syntrophomonas wolfei subsp. wolfei (strain DSM 2245B / Goettingen).